Here is a 73-residue protein sequence, read N- to C-terminus: MASSVLARPGPSTVLPAMTRPPPPMAHRAAATPSFARSSQPQLTDDAVLALLANAEHTEAGEETTARGWCVVA.

The interval 1–41 (MASSVLARPGPSTVLPAMTRPPPPMAHRAAATPSFARSSQP) is disordered. A Cysteine methyl ester modification is found at C70. A lipid anchor (S-farnesyl cysteine) is attached at C70. The propeptide at 71 to 73 (VVA) is removed in mature form.

It localises to the cell membrane. In terms of biological role, activates B-regulated development. The polypeptide is Mating-type pheromone BBP1(3) (BBP1(3)) (Schizophyllum commune (Split gill fungus)).